The primary structure comprises 127 residues: Small ribosomal subunit protein uS13 (127 aa).

It belongs to the universal ribosomal protein uS13 family. In terms of assembly, part of the 30S ribosomal subunit. Forms a loose heterodimer with protein S19. Forms two bridges to the 50S subunit in the 70S ribosome.

Its function is as follows. Located at the top of the head of the 30S subunit, it contacts several helices of the 16S rRNA. In the 70S ribosome it contacts the 23S rRNA (bridge B1a) and protein L5 of the 50S subunit (bridge B1b), connecting the 2 subunits; these bridges are implicated in subunit movement. Contacts the tRNAs in the A and P-sites. The sequence is that of Small ribosomal subunit protein uS13 from Roseiflexus sp. (strain RS-1).